The primary structure comprises 218 residues: Phosphoglycolate phosphatase (218 aa).

The active-site Nucleophile is the Asp7. Positions 7, 9, and 167 each coordinate Mg(2+).

The protein belongs to the HAD-like hydrolase superfamily. CbbY/CbbZ/Gph/YieH family. Mg(2+) serves as cofactor.

The catalysed reaction is 2-phosphoglycolate + H2O = glycolate + phosphate. The protein operates within organic acid metabolism; glycolate biosynthesis; glycolate from 2-phosphoglycolate: step 1/1. Functionally, specifically catalyzes the dephosphorylation of 2-phosphoglycolate. Is involved in the dissimilation of the intracellular 2-phosphoglycolate formed during the DNA repair of 3'-phosphoglycolate ends, a major class of DNA lesions induced by oxidative stress. The polypeptide is Phosphoglycolate phosphatase (Cereibacter sphaeroides (strain ATCC 17029 / ATH 2.4.9) (Rhodobacter sphaeroides)).